The chain runs to 4471 residues: Dynein axonemal heavy chain 10 (4471 aa).

Residues 1–1793 (MVPEEVEVEI…NIRQCTGTFG (1793 aa)) form a stem region. The disordered stretch occupies residues 46-65 (TESLGQPLNREDEEMDKEIS). Coiled-coil stretches lie at residues 203 to 223 (NVQK…GEIK), 602 to 622 (QEVK…EDRK), 1071 to 1106 (KLLN…EDLK), and 1217 to 1245 (VELL…KLFD). Asn1074 carries an N-linked (GlcNAc...) asparagine glycan. A TPR 1 repeat occupies 1221–1254 (GVYERELARHEKSRQELANAEKLFDLPITMYPEL). AAA regions lie at residues 1794–2015 (YGYE…VLVM), 2075–2294 (DAVE…VIVE), 2417–2665 (IHAP…VFNG), and 2765–3014 (EYNE…LRRS). Residues 1832–1839 (GPAGTGKT) carry the GPAGTGKT motif motif. 1832 to 1839 (GPAGTGKT) serves as a coordination point for ATP. Residues 1882–1888 (CFDEFNR) carry the CFDEFNR motif motif. ATP is bound by residues 2113–2120 (GPTRGGKS) and 2455–2462 (GESGTSKT). 2 TPR repeats span residues 2736–2769 (MALH…YNES) and 2771–2797 (TKMN…MDRG). A coiled-coil region spans residues 2747–2770 (EDIQDYEAAKALFQEILEEYNESN). 2803–2810 (GVGGSGKQ) serves as a coordination point for ATP. Positions 3029–3313 (YSKLLDEKTQ…QKLQEEAEIM (285 aa)) are stalk. Coiled-coil stretches lie at residues 3045-3131 (KRLD…LAEV), 3257-3327 (KREK…ISGL), and 3567-3638 (ERRE…EKTA). Positions 3399–3629 (LTDDVEISRW…TKSKATEVSE (231 aa)) are AAA 5. A TPR 4 repeat occupies 3802 to 3837 (WQEWYDLDSLEQFPVPLGYDNNITPFQKLLILRCFR). The tract at residues 3845–4062 (VTDYVTVTMG…FQVCMEILNT (218 aa)) is AAA 6. Residues 4074-4108 (RIPWGSLKYLIGEVMYGGRAIDSFDRRILTIYMDE) form a TPR 5 repeat. Residues 4235–4260 (LLQELERFNKLVVRMTKSLAELQRAL) adopt a coiled-coil conformation.

This sequence belongs to the dynein heavy chain family. As to quaternary structure, consists of at least two heavy chains and a number of intermediate and light chains. As to expression, expressed primarily in trachea and testis, 2 tissues containing axonemal structures. Also expressed in brain but not in adult heart.

The protein localises to the cytoplasm. It is found in the cytoskeleton. Its subcellular location is the cilium axoneme. In terms of biological role, force generating protein of respiratory cilia. Produces force towards the minus ends of microtubules. Dynein has ATPase activity; the force-producing power stroke is thought to occur on release of ADP. Involved in sperm motility; implicated in sperm flagellar assembly. Probable inner arm dynein heavy chain. The protein is Dynein axonemal heavy chain 10 (DNAH10) of Homo sapiens (Human).